Reading from the N-terminus, the 718-residue chain is Pentatricopeptide repeat-containing protein At1g22960, mitochondrial (718 aa).

A mitochondrion-targeting transit peptide spans 1 to 11 (MILCLRLCLRA). PPR repeat units follow at residues 167–201 (ALKL…GFLP), 202–236 (SVRN…GIMP), 237–271 (TVIT…NIEF), 272–306 (SEVT…GFAV), 307–341 (TPYS…GIYP), 342–372 (TTST…MAAP), 373–407 (DVVS…DIHP), 408–442 (SIVT…LIFP), 443–477 (DVIT…GIKP), 478–512 (DGYA…DHHA), 514–548 (DLTI…GLVP), 549–583 (DHVT…RLYP), 584–618 (SVIT…GVRP), 619–653 (NVMT…GIPP), and 654–688 (NKYS…EIEP).

Belongs to the PPR family. P subfamily.

The protein localises to the mitochondrion. This is Pentatricopeptide repeat-containing protein At1g22960, mitochondrial from Arabidopsis thaliana (Mouse-ear cress).